The chain runs to 158 residues: Glutathione peroxidase homolog BsaA (158 aa).

Thr-36 is a catalytic residue.

This sequence belongs to the glutathione peroxidase family.

The sequence is that of Glutathione peroxidase homolog BsaA (bsaA) from Staphylococcus epidermidis (strain ATCC 35984 / DSM 28319 / BCRC 17069 / CCUG 31568 / BM 3577 / RP62A).